Reading from the N-terminus, the 158-residue chain is Large ribosomal subunit protein uL11 (158 aa).

It belongs to the universal ribosomal protein uL11 family. Part of the ribosomal stalk of the 50S ribosomal subunit. Interacts with L10 and the large rRNA to form the base of the stalk. L10 forms an elongated spine to which L12 dimers bind in a sequential fashion forming a multimeric L10(L12)X complex.

Functionally, forms part of the ribosomal stalk which helps the ribosome interact with GTP-bound translation factors. This is Large ribosomal subunit protein uL11 from Methanocella arvoryzae (strain DSM 22066 / NBRC 105507 / MRE50).